Reading from the N-terminus, the 381-residue chain is DnaJ-related protein spj1 (381 aa).

The region spanning 5–74 (NFSQKQILGV…RKIYDAYGEE (70 aa)) is the J domain. Residues 72–93 (GEEGLNGQPGGPGGGPGEGFPG) are disordered. Over residues 78–93 (GQPGGPGGGPGEGFPG) the composition is skewed to gly residues. The CR-type zinc finger occupies 138-225 (GGSFTLEIPV…CKGERVAEVV (88 aa)). CXXCXGXG motif repeat units follow at residues 151–158 (CSVCSGQG), 172–179 (CPVCGGSG), 199–206 (CNACNGNG), and 213–220 (CPRCKGER). The Prevents secretion from ER signature appears at 378–381 (FDEL).

The protein resides in the endoplasmic reticulum. This is DnaJ-related protein spj1 (spj1) from Schizosaccharomyces pombe (strain 972 / ATCC 24843) (Fission yeast).